The chain runs to 212 residues: Amelotin (212 aa).

The N-terminal stretch at 1-16 (MKTVVLLLCLLGSAQS) is a signal peptide. 2 disordered regions span residues 23–42 (PALG…PLTQ) and 141–212 (PSGQ…NRTK). 2 stretches are compositionally biased toward polar residues: residues 33-42 (TPGQVTPLTQ) and 165-178 (PANQ…TTPA).

This sequence belongs to the amelotin family. In terms of processing, O-glycosylated. Post-translationally, phosphorylated by FAM20C in vitro. As to expression, highest expression in the mandible. Found in the basal lamina of maturation stage ameloblasts of incisors and unerupted molars. Also found in the internal basal lamina of junctional epithelium in molars.

The protein resides in the secreted. Its function is as follows. Is a promoter of calcium phosphate mineralization, playing a critical role in the formation of the compact, mineralized, aprismatic enamel surface layer during the maturation stage of amelogenesis. The chain is Amelotin from Rattus norvegicus (Rat).